The following is a 473-amino-acid chain: Mitochondrial distribution and morphology protein 10 (473 aa).

It belongs to the MDM10 family. As to quaternary structure, component of the ER-mitochondria encounter structure (ERMES) or MDM complex, composed of MMM1, MDM10, MDM12 and MDM34. Associates with the mitochondrial outer membrane sorting assembly machinery SAM(core) complex.

It is found in the mitochondrion outer membrane. Component of the ERMES/MDM complex, which serves as a molecular tether to connect the endoplasmic reticulum and mitochondria. Components of this complex are involved in the control of mitochondrial shape and protein biogenesis and may function in phospholipid exchange. MDM10 is involved in the late assembly steps of the general translocase of the mitochondrial outer membrane (TOM complex). Functions in the TOM40-specific route of the assembly of outer membrane beta-barrel proteins, including the association of TOM40 with the receptor TOM22 and small TOM proteins. Can associate with the SAM(core) complex as well as the MDM12-MMM1 complex, both involved in late steps of the major beta-barrel assembly pathway, that is responsible for biogenesis of all outer membrane beta-barrel proteins. May act as a switch that shuttles between both complexes and channels precursor proteins into the TOM40-specific pathway. Plays a role in mitochondrial morphology and in the inheritance of mitochondria. In Candida albicans (strain SC5314 / ATCC MYA-2876) (Yeast), this protein is Mitochondrial distribution and morphology protein 10.